Here is a 124-residue protein sequence, read N- to C-terminus: Large ribosomal subunit protein bL12 (124 aa).

The protein belongs to the bacterial ribosomal protein bL12 family. In terms of assembly, homodimer. Part of the ribosomal stalk of the 50S ribosomal subunit. Forms a multimeric L10(L12)X complex, where L10 forms an elongated spine to which 2 to 4 L12 dimers bind in a sequential fashion. Binds GTP-bound translation factors.

Forms part of the ribosomal stalk which helps the ribosome interact with GTP-bound translation factors. Is thus essential for accurate translation. This is Large ribosomal subunit protein bL12 from Leptothrix cholodnii (strain ATCC 51168 / LMG 8142 / SP-6) (Leptothrix discophora (strain SP-6)).